The sequence spans 131 residues: uncharacterized protein (131 aa).

Residues Val17–Leu39 traverse the membrane as a helical segment.

It is found in the membrane. This is an uncharacterized protein from Archaeoglobus fulgidus (strain ATCC 49558 / DSM 4304 / JCM 9628 / NBRC 100126 / VC-16).